Here is a 318-residue protein sequence, read N- to C-terminus: NADH-ubiquinone oxidoreductase chain 1 (318 aa).

8 helical membrane passes run 2–22 (FMIN…FLTL), 70–90 (MFII…SPLP), 100–120 (LGVL…LWSG), 136–156 (VAQT…VLLM), 172–192 (LWLL…TLAE), 222–242 (LFFL…AILF), 253–273 (ELYT…FLWI), and 294–314 (LPLT…TASI).

It belongs to the complex I subunit 1 family. Core subunit of respiratory chain NADH dehydrogenase (Complex I) which is composed of 45 different subunits.

The protein localises to the mitochondrion inner membrane. The catalysed reaction is a ubiquinone + NADH + 5 H(+)(in) = a ubiquinol + NAD(+) + 4 H(+)(out). Core subunit of the mitochondrial membrane respiratory chain NADH dehydrogenase (Complex I) which catalyzes electron transfer from NADH through the respiratory chain, using ubiquinone as an electron acceptor. Essential for the catalytic activity and assembly of complex I. The chain is NADH-ubiquinone oxidoreductase chain 1 (MT-ND1) from Balaenoptera physalus (Fin whale).